A 76-amino-acid polypeptide reads, in one-letter code: uncharacterized protein (76 aa).

Residues 15–69 enclose the HTH cro/C1-type domain; it reads VRIVRKEQNLRQDELAGVAGVGLRFIVDLEAGKPTAQIGKVLQVLQTLGCSIDIL. Residues 26–45 constitute a DNA-binding region (H-T-H motif); it reads QDELAGVAGVGLRFIVDLEA.

This is an uncharacterized protein from Sinorhizobium fredii (strain NBRC 101917 / NGR234).